We begin with the raw amino-acid sequence, 207 residues long: Protein-L-isoaspartate O-methyltransferase (207 aa).

S56 is an active-site residue.

Belongs to the methyltransferase superfamily. L-isoaspartyl/D-aspartyl protein methyltransferase family.

The protein localises to the cytoplasm. The enzyme catalyses [protein]-L-isoaspartate + S-adenosyl-L-methionine = [protein]-L-isoaspartate alpha-methyl ester + S-adenosyl-L-homocysteine. Functionally, catalyzes the methyl esterification of L-isoaspartyl residues in peptides and proteins that result from spontaneous decomposition of normal L-aspartyl and L-asparaginyl residues. It plays a role in the repair and/or degradation of damaged proteins. This chain is Protein-L-isoaspartate O-methyltransferase, found in Pyrobaculum islandicum (strain DSM 4184 / JCM 9189 / GEO3).